A 460-amino-acid chain; its full sequence is Probable glucan endo-1,3-beta-glucosidase eglC (460 aa).

Positions 1 to 18 (MQLAQLAAFAMTLATSEA) are cleaved as a signal peptide. The active-site Proton donor is the Glu128. A glycan (N-linked (GlcNAc...) asparagine) is linked at Asn183. The Nucleophile role is filled by Glu239. N-linked (GlcNAc...) asparagine glycosylation is found at Asn312, Asn367, and Asn373. The segment at 379 to 437 (RPSGSASARPSAGAISSGSGSSSSGSGSSGSTGTSATSGQSSSSGSSAAAGSSSPAAFS) is disordered. A compositionally biased stretch (low complexity) spans 380-437 (PSGSASARPSAGAISSGSGSSSSGSGSSGSTGTSATSGQSSSSGSSAAAGSSSPAAFS). The GPI-anchor amidated serine moiety is linked to residue Ser430. The propeptide at 431-460 (SSPAAFSGASTLSGSLFGAVVAVFMTLAAL) is removed in mature form.

It belongs to the glycosyl hydrolase 17 family. Post-translationally, the GPI-anchor is attached to the protein in the endoplasmic reticulum and serves to target the protein to the cell surface. There, the glucosamine-inositol phospholipid moiety is cleaved off and the GPI-modified mannoprotein is covalently attached via its lipidless GPI glycan remnant to the 1,6-beta-glucan of the outer cell wall layer.

It localises to the cell membrane. Its subcellular location is the secreted. The protein localises to the cell wall. It carries out the reaction Hydrolysis of (1-&gt;3)-beta-D-glucosidic linkages in (1-&gt;3)-beta-D-glucans.. Glucanases play a role in cell expansion during growth, in cell-cell fusion during mating, and in spore release during sporulation. This enzyme may be involved in beta-glucan degradation and also function biosynthetically as a transglycosylase. This is Probable glucan endo-1,3-beta-glucosidase eglC (eglC) from Aspergillus niger (strain ATCC MYA-4892 / CBS 513.88 / FGSC A1513).